A 163-amino-acid polypeptide reads, in one-letter code: MVTFLGNPVSFTGKQLQVGDKALDFSLTTTDLSKKSLADFDGKKKVLSVVPSIDTGICSTQTRRFNEELAGLDNTVVLTVSMDLPFAQKRWCGAEGLDNAIMLSDYFDHSFGRDYALLINEWHLLARAVFVLDTDNTIRYVEYVDNINSEPNFEAAIAAAKAL.

Positions 16 to 162 constitute a Thioredoxin domain; sequence LQVGDKALDF…FEAAIAAAKA (147 aa). Cys58 functions as the Cysteine sulfenic acid (-SOH) intermediate in the catalytic mechanism. Cys58 and Cys92 are oxidised to a cystine.

The protein belongs to the peroxiredoxin family. Tpx subfamily. As to quaternary structure, homodimer.

The enzyme catalyses a hydroperoxide + [thioredoxin]-dithiol = an alcohol + [thioredoxin]-disulfide + H2O. Thiol-specific peroxidase that catalyzes the reduction of hydrogen peroxide and organic hydroperoxides to water and alcohols, respectively. Plays a role in cell protection against oxidative stress by detoxifying peroxides. The chain is Thiol peroxidase from Streptococcus pneumoniae serotype 2 (strain D39 / NCTC 7466).